The sequence spans 119 residues: uncharacterized protein (119 aa).

The segment at 86–119 is disordered; the sequence is KKQRMKMLTEQEEEEEEEEEEPPKPKKKVINRKK. Residues 95-106 are compositionally biased toward acidic residues; the sequence is EQEEEEEEEEEE. The segment covering 110–119 has biased composition (basic residues); the sequence is PKKKVINRKK.

This is an uncharacterized protein from Sputnik virophage.